A 275-amino-acid chain; its full sequence is Large ribosomal subunit protein uL2c (275 aa).

A disordered region spans residues 225-249 (PVDHPHGGGEGRAPIGRKKPTTPWG).

This sequence belongs to the universal ribosomal protein uL2 family. Part of the 50S ribosomal subunit.

It localises to the plastid. In Cuscuta reflexa (Southern Asian dodder), this protein is Large ribosomal subunit protein uL2c (rpl2).